Reading from the N-terminus, the 108-residue chain is Iron-sulfur cluster assembly protein CyaY (108 aa).

The protein belongs to the frataxin family.

Functionally, involved in iron-sulfur (Fe-S) cluster assembly. May act as a regulator of Fe-S biogenesis. This chain is Iron-sulfur cluster assembly protein CyaY, found in Burkholderia vietnamiensis (strain G4 / LMG 22486) (Burkholderia cepacia (strain R1808)).